The sequence spans 513 residues: MQLNSTEISDLIKQRIEQFEVVSESRNEGTIVAVSDGIIRIHGLADVMQGEMIELPGNRFAIALNLERDSVGAVVMGPYADLAEGVKVKTTGRILEVPVGRGLLGRVVNTLGEPIDGKGPIDNDGFSPVEVIAPGVIERQSVSQPVQTGYKAVDAMIPIGRGQRELIIGDRQTGKTAMAIDAIINQKDSGIKCVYVAIGQKASTIANVVRKLEEHGALANTIVVVATASEAAALQFLAPYSGCSMGEYFRDRGEDALIVYDDLSKQAVAYRQISLLLKRPPGREAYPGDVFYLHSRLLERASRVNEIYVEKFTKGAVTGKTGSLTALPIIETQAGDVSAFVPTNVISITDGQIFLETDLFNSGLRPAVNPGISVSRVGGAAQTKIIKKLSGGIRTALAQYRELAAFSQFASDLDDATRAQLEHGVRVTELMKQKQYAPMSVAAQSVSIFAAEKGYLKSVELKKVGDFEAALLSFMNSEHAALMKLINETGDYNAEIEAELKAGLDKFVATQTW.

Residue 169–176 (GDRQTGKT) coordinates ATP.

This sequence belongs to the ATPase alpha/beta chains family. As to quaternary structure, F-type ATPases have 2 components, CF(1) - the catalytic core - and CF(0) - the membrane proton channel. CF(1) has five subunits: alpha(3), beta(3), gamma(1), delta(1), epsilon(1). CF(0) has three main subunits: a(1), b(2) and c(9-12). The alpha and beta chains form an alternating ring which encloses part of the gamma chain. CF(1) is attached to CF(0) by a central stalk formed by the gamma and epsilon chains, while a peripheral stalk is formed by the delta and b chains.

It localises to the cell inner membrane. It carries out the reaction ATP + H2O + 4 H(+)(in) = ADP + phosphate + 5 H(+)(out). Produces ATP from ADP in the presence of a proton gradient across the membrane. The alpha chain is a regulatory subunit. The polypeptide is ATP synthase subunit alpha (Shewanella putrefaciens (strain CN-32 / ATCC BAA-453)).